Here is a 367-residue protein sequence, read N- to C-terminus: Flagellar P-ring protein (367 aa).

The first 21 residues, M1–A21, serve as a signal peptide directing secretion.

The protein belongs to the FlgI family. In terms of assembly, the basal body constitutes a major portion of the flagellar organelle and consists of four rings (L,P,S, and M) mounted on a central rod.

It is found in the periplasm. It localises to the bacterial flagellum basal body. Its function is as follows. Assembles around the rod to form the L-ring and probably protects the motor/basal body from shearing forces during rotation. This is Flagellar P-ring protein from Salmonella paratyphi C (strain RKS4594).